The chain runs to 592 residues: Aspartate--tRNA(Asp/Asn) ligase (592 aa).

Glu-175 is an L-aspartate binding site. Positions 199 to 202 (QQFK) are aspartate. Residues Arg-221 and His-451 each contribute to the L-aspartate site. 221 to 223 (RDE) is a binding site for ATP. Glu-485 provides a ligand contact to ATP. Arg-492 contacts L-aspartate. 537–540 (GIDR) provides a ligand contact to ATP.

The protein belongs to the class-II aminoacyl-tRNA synthetase family. Type 1 subfamily. Homodimer.

It is found in the cytoplasm. The enzyme catalyses tRNA(Asx) + L-aspartate + ATP = L-aspartyl-tRNA(Asx) + AMP + diphosphate. Its function is as follows. Aspartyl-tRNA synthetase with relaxed tRNA specificity since it is able to aspartylate not only its cognate tRNA(Asp) but also tRNA(Asn). Reaction proceeds in two steps: L-aspartate is first activated by ATP to form Asp-AMP and then transferred to the acceptor end of tRNA(Asp/Asn). The protein is Aspartate--tRNA(Asp/Asn) ligase of Phenylobacterium zucineum (strain HLK1).